The chain runs to 1157 residues: Pesticidal crystal protein Cry9Ca (1157 aa).

This sequence belongs to the delta endotoxin family.

Its function is as follows. Promotes colloidosmotic lysis by binding to the midgut epithelial cells of Lepidoptera larvae. Has a fairly broad spectrum of activity against members of the Pyralidae, Plutellidae, Sphingidae and Noctuidae families. It was the first insecticidal crystal protein characterized with activity against cutworms. No activity is observed against some beetles, such as the Colorado potato beetle. This chain is Pesticidal crystal protein Cry9Ca (cry9Ca), found in Bacillus thuringiensis subsp. tolworthi.